The chain runs to 132 residues: Small ribosomal subunit protein uS8 (132 aa).

It belongs to the universal ribosomal protein uS8 family. Part of the 30S ribosomal subunit. Contacts proteins S5 and S12.

In terms of biological role, one of the primary rRNA binding proteins, it binds directly to 16S rRNA central domain where it helps coordinate assembly of the platform of the 30S subunit. The protein is Small ribosomal subunit protein uS8 of Anaeromyxobacter dehalogenans (strain 2CP-1 / ATCC BAA-258).